The following is a 337-amino-acid chain: Glyceraldehyde-3-phosphate dehydrogenase 1 (337 aa).

Residues 12-13 (RI), Asp-34, and Arg-79 each bind NAD(+). D-glyceraldehyde 3-phosphate-binding positions include 150 to 152 (SCT), Thr-181, 210 to 211 (TG), and Arg-233. The active-site Nucleophile is Cys-151. Asn-315 is an NAD(+) binding site.

It belongs to the glyceraldehyde-3-phosphate dehydrogenase family. Homotetramer.

The protein localises to the cytoplasm. The catalysed reaction is D-glyceraldehyde 3-phosphate + phosphate + NAD(+) = (2R)-3-phospho-glyceroyl phosphate + NADH + H(+). Its pathway is carbohydrate degradation; glycolysis; pyruvate from D-glyceraldehyde 3-phosphate: step 1/5. This is Glyceraldehyde-3-phosphate dehydrogenase 1 (GPD1) from Mucor circinelloides f. lusitanicus (Mucor racemosus var. lusitanicus).